The chain runs to 122 residues: Large ribosomal subunit protein uL14 (122 aa).

It belongs to the universal ribosomal protein uL14 family. In terms of assembly, part of the 50S ribosomal subunit. Forms a cluster with proteins L3 and L19. In the 70S ribosome, L14 and L19 interact and together make contacts with the 16S rRNA in bridges B5 and B8.

Its function is as follows. Binds to 23S rRNA. Forms part of two intersubunit bridges in the 70S ribosome. This chain is Large ribosomal subunit protein uL14, found in Lactobacillus helveticus (strain DPC 4571).